Reading from the N-terminus, the 556-residue chain is Membrane protein insertase YidC (556 aa).

The next 5 helical transmembrane spans lie at 6–26 (IVLY…WQID), 332–352 (LDLT…FSLM), 358–378 (VVGN…LAFY), 428–448 (LGGC…YWVL), and 501–521 (VMMF…SGLV).

This sequence belongs to the OXA1/ALB3/YidC family. Type 1 subfamily. In terms of assembly, interacts with the Sec translocase complex via SecD. Specifically interacts with transmembrane segments of nascent integral membrane proteins during membrane integration.

Its subcellular location is the cell inner membrane. Its function is as follows. Required for the insertion and/or proper folding and/or complex formation of integral membrane proteins into the membrane. Involved in integration of membrane proteins that insert both dependently and independently of the Sec translocase complex, as well as at least some lipoproteins. Aids folding of multispanning membrane proteins. This chain is Membrane protein insertase YidC, found in Legionella pneumophila (strain Paris).